The chain runs to 140 residues: Gonadotropin subunit beta-2 (140 aa).

The signal sequence occupies residues 1–23 (MSVPASSFLLLCFLMNSFSPAQS). Disulfide bonds link Cys29–Cys77, Cys43–Cys92, Cys46–Cys130, Cys54–Cys108, Cys58–Cys110, and Cys113–Cys120. Asn33 is a glycosylation site (N-linked (GlcNAc...) asparagine).

The protein belongs to the glycoprotein hormones subunit beta family. As to quaternary structure, heterodimer of an alpha and a beta chain.

It is found in the secreted. Its function is as follows. Involved in gametogenesis and steroidogenesis. The polypeptide is Gonadotropin subunit beta-2 (cgbb) (Ictalurus punctatus (Channel catfish)).